A 68-amino-acid chain; its full sequence is UPF0337 protein RB10934 (68 aa).

Belongs to the UPF0337 (CsbD) family.

This Rhodopirellula baltica (strain DSM 10527 / NCIMB 13988 / SH1) protein is UPF0337 protein RB10934.